Reading from the N-terminus, the 782-residue chain is E3 ubiquitin-protein ligase SopA (782 aa).

The segment at 137 to 171 (VSVSANNRPTVSEGRTPPVSPSLSLQATSSPSSPA) is disordered. Residues 157–171 (PSLSLQATSSPSSPA) show a composition bias toward low complexity. Residue C753 is the Glycyl thioester intermediate of the active site.

Belongs to the SopA E3 ligase family. In terms of processing, ubiquitinated in the presence of host E1 ubiquitin-activating enzyme, E2 ubiquitin-conjugating enzyme and ubiquitin.

The protein localises to the secreted. It localises to the host mitochondrion. The enzyme catalyses S-ubiquitinyl-[E2 ubiquitin-conjugating enzyme]-L-cysteine + [acceptor protein]-L-lysine = [E2 ubiquitin-conjugating enzyme]-L-cysteine + N(6)-ubiquitinyl-[acceptor protein]-L-lysine.. Effector proteins function to alter host cell physiology and promote bacterial survival in host tissues. This protein is an E3 ubiquitin ligase that interferes with host's ubiquitination pathway. Required for inducing polymorphonuclear leukocytes migration across the intestinal epithelium. This Salmonella dublin protein is E3 ubiquitin-protein ligase SopA (sopA).